We begin with the raw amino-acid sequence, 213 residues long: Small ribosomal subunit protein uS5 (213 aa).

An S5 DRBM domain is found at 49–112 (LEEEVMDVNL…DNAKYNLIKV (64 aa)).

It belongs to the universal ribosomal protein uS5 family. As to quaternary structure, part of the 30S ribosomal subunit. Contacts protein S4.

Functionally, with S4 and S12 plays an important role in translational accuracy. In Methanobrevibacter smithii (strain ATCC 35061 / DSM 861 / OCM 144 / PS), this protein is Small ribosomal subunit protein uS5.